The following is a 174-amino-acid chain: Small ribosomal subunit protein uS5 (174 aa).

Residues 20-83 enclose the S5 DRBM domain; the sequence is IEDQLVAINR…EAGKKRMIKV (64 aa).

Belongs to the universal ribosomal protein uS5 family. As to quaternary structure, part of the 30S ribosomal subunit. Contacts proteins S4 and S8.

Functionally, with S4 and S12 plays an important role in translational accuracy. Its function is as follows. Located at the back of the 30S subunit body where it stabilizes the conformation of the head with respect to the body. The protein is Small ribosomal subunit protein uS5 of Lactobacillus gasseri (strain ATCC 33323 / DSM 20243 / BCRC 14619 / CIP 102991 / JCM 1131 / KCTC 3163 / NCIMB 11718 / NCTC 13722 / AM63).